The following is a 1154-amino-acid chain: MKLTRLRLHGFKSFVEPTDFMIEPGLTGVVGPNGCGKSNLVEALRWAMGETSHKSLRATDMDAVIFAGSGNRPARNHAEVVMSIDNSDRTAPAALNDADTLDISRRIEREAGSVYRINGREVRARDVQLLFADAATGARSPALVHQGKIGEIIQAKPEQRRRVLEDAAGVAGLHARRHEAELRLKAAETNLTRVEDVIGQLSTQVDGLKKQARQAIRFREVAAKVRKTEAMLYHLRWRDAQAEVGAAAEVHDLGVRQLAECTRVQAEASRIQADRASTLPSLREAEARAAAGLQRLINAREQLDREEARAKERVVELERRLTQFSSDVAREQQQAIDADAALERLDTEDVELREEILERVEKRSGVDERVAEADASLGEAEQLFAELTTQLAELTARRNQFEQSVRTHRDRLARLDTEIKNVESEIDRLSAETSGAGDLTELAEAVEIAQELLAEQEGAVQEAEAAQIAARQTLDGSRAPLVDAEKKVQRLETEAKTISKILNGETKNLWPPIIDGITVAKGYEKAIGAVLGDDLDAPVDPSAPMRWTDVGVQPEDPALPEGVEALAQHVTAPPELARRLAQIGVVTKERGNELCEQLKTGQRLVSLDGDVWRWDGFVASAHAPTGAARRLAERARLTDIENELEQARIEATAKRQALETAEADLKMAAAAETASRESLRGARREVDAARERFAAAEREVNRHAARKSALAEAQSRLATDRAEAEAALENAEAQIADLEPNTEAEARLAAVRGDIDGRRRIAAQIRAEAQALAREAELADKRLQAIAAERMDWQKRKAGAASQIATVEERVAELTAERAELENAPEVFAEKRSAVITEIEFAEADRRAAADALAAAEQAMSETDRLAKASLEQLSSAREACARAEERMEAARRRLEDVEREIRDMLEVEPQAAAQLAEIVEGAELPPLAEIEESLDKLRRDRERLGAVNLRAEEELNEVETQHGTLAAERDDLVEAIKKLRTGIQSLNKEARERLLASFDVVNGHFKRLFTTLFGGGEAELKLIESDDPLEAGLDIIAKPPGKKPQSLSLLSGGEQALTAMALIFAVFLTNPSPICVLDEVDAPLDDHNVERFCDLLTDMAKTTETRFITITHNPITMARMNRLFGVTMAERGVSQLVSVDLQGAVDILDQNVA.

32 to 39 (PNGCGKSN) is an ATP binding site. Coiled coils occupy residues 170-215 (VAGL…ARQA), 282-505 (LREA…LNGE), and 627-993 (AARR…EARE).

It belongs to the SMC family. As to quaternary structure, homodimer.

The protein resides in the cytoplasm. Required for chromosome condensation and partitioning. The protein is Chromosome partition protein Smc of Rhodopseudomonas palustris (strain ATCC BAA-98 / CGA009).